The following is a 594-amino-acid chain: Putative aldehyde oxidase Art an 7 (594 aa).

The N-terminal stretch at 1-23 (MASSIKTVILFLLPLLLAYSVLA) is a signal peptide. Residues 28-56 (TDGGDKPGPEIDDGGGDKPVPGNNDGASD) form a disordered region.

In terms of processing, the N-terminus is blocked. Post-translationally, glycosylated. In terms of tissue distribution, expressed in pollen (at protein level).

The protein resides in the cytoplasm. The enzyme catalyses an aldehyde + O2 + H2O = a carboxylate + H2O2 + H(+). Its function is as follows. Catalyzes the oxidation of aldehydes to the corresponding carboxylate by coupling the reaction to the reduction of dioxygen to hydrogen peroxide. Substrates include glyoxal and other aldehydes. Does not have enzymatic activity on D-galactose. This chain is Putative aldehyde oxidase Art an 7, found in Artemisia annua (Sweet wormwood).